A 402-amino-acid chain; its full sequence is Phosphoglycerate kinase (402 aa).

Residues 24–26, arginine 39, 62–65, arginine 121, and arginine 161 contribute to the substrate site; these read DLN and HLGR. Residues lysine 211, glycine 299, glutamate 330, and 359–362 contribute to the ATP site; that span reads GGDS.

This sequence belongs to the phosphoglycerate kinase family. As to quaternary structure, monomer.

It localises to the cytoplasm. The enzyme catalyses (2R)-3-phosphoglycerate + ATP = (2R)-3-phospho-glyceroyl phosphate + ADP. It participates in carbohydrate degradation; glycolysis; pyruvate from D-glyceraldehyde 3-phosphate: step 2/5. The polypeptide is Phosphoglycerate kinase (Mycolicibacterium gilvum (strain PYR-GCK) (Mycobacterium gilvum (strain PYR-GCK))).